The following is a 239-amino-acid chain: Pyridoxine 5'-phosphate synthase (239 aa).

Residue N7 coordinates 3-amino-2-oxopropyl phosphate. 9-10 contributes to the 1-deoxy-D-xylulose 5-phosphate binding site; it reads DH. 3-amino-2-oxopropyl phosphate is bound at residue R18. H43 acts as the Proton acceptor in catalysis. The 1-deoxy-D-xylulose 5-phosphate site is built by R45 and H50. The active-site Proton acceptor is the E70. T100 contacts 1-deoxy-D-xylulose 5-phosphate. H191 serves as the catalytic Proton donor. Residues G192 and 213–214 each bind 3-amino-2-oxopropyl phosphate; that span reads GH.

Belongs to the PNP synthase family. In terms of assembly, homooctamer; tetramer of dimers.

It localises to the cytoplasm. The catalysed reaction is 3-amino-2-oxopropyl phosphate + 1-deoxy-D-xylulose 5-phosphate = pyridoxine 5'-phosphate + phosphate + 2 H2O + H(+). It functions in the pathway cofactor biosynthesis; pyridoxine 5'-phosphate biosynthesis; pyridoxine 5'-phosphate from D-erythrose 4-phosphate: step 5/5. In terms of biological role, catalyzes the complicated ring closure reaction between the two acyclic compounds 1-deoxy-D-xylulose-5-phosphate (DXP) and 3-amino-2-oxopropyl phosphate (1-amino-acetone-3-phosphate or AAP) to form pyridoxine 5'-phosphate (PNP) and inorganic phosphate. The sequence is that of Pyridoxine 5'-phosphate synthase from Geobacter sulfurreducens (strain ATCC 51573 / DSM 12127 / PCA).